The sequence spans 96 residues: Ubiquitin-like protein NEDD8-like protein 1 (96 aa).

Residues 75-96 are disordered; it reads SQSDNSEKSEKSGKSEKDCILM. Residues 79-96 show a composition bias toward basic and acidic residues; it reads NSEKSEKSGKSEKDCILM.

Belongs to the ubiquitin family.

The sequence is that of Ubiquitin-like protein NEDD8-like protein 1 (nedd8l1) from Dictyostelium discoideum (Social amoeba).